The primary structure comprises 163 residues: Zinc finger A20 and AN1 domain-containing stress-associated protein 3 (163 aa).

An A20-type zinc finger spans residues 7–41 (LQEPRLCANNCGFFGSTATQNLCSKCFRDLQHQEQ). 4 residues coordinate Zn(2+): C13, C17, C29, and C32. The segment at 57–101 (VGAAASSSVSPPPPPPADSKEIVEAKSEKRAAAEPEEADGPPQDP) is disordered. A compositionally biased stretch (basic and acidic residues) spans 74-89 (DSKEIVEAKSEKRAAA). The AN1-type zinc finger occupies 98-144 (PQDPKRCLTCRRRVGITGFRCRCGFVFCGTHRYAEQHECSFDFKRMG). C104, C107, C118, C120, C125, H128, H134, and C136 together coordinate Zn(2+).

Functionally, may be involved in environmental stress response. This Arabidopsis thaliana (Mouse-ear cress) protein is Zinc finger A20 and AN1 domain-containing stress-associated protein 3 (SAP3).